The primary structure comprises 421 residues: Proton/sodium-glutamate symport protein (421 aa).

Residues 1 to 3 (MRK) are Cytoplasmic-facing. A helical membrane pass occupies residues 4-24 (IGLAWQIFIGLILGIIVGAIF). Residues 25-43 (YGNPKVATYLQPIGDIFLR) are Extracellular-facing. Residues 44 to 64 (LIKMIVIPIVISSLVVGVASV) traverse the membrane as a helical segment. At 65-77 (GDLKKLGKLGGKT) the chain is on the cytoplasmic side. A helical membrane pass occupies residues 78–98 (IIYFEIITTIAIVVGLLAANI). The Extracellular portion of the chain corresponds to 99–148 (FQPGTGVNMKSLEKTDIQSYVDTTNEVQHHSMVETFVNIVPKNIFESLTK). Residues 149–169 (GDMLPIIFFSVMFGLGVAAIG) form a helical membrane-spanning segment. Residues 170 to 198 (EKGKPVLQFFQGTAEAMFYVTNQIMKFAP) are Cytoplasmic-facing. Residues 199-219 (FGVFALIGVTVSKFGVESLIP) form a helical membrane-spanning segment. Residues 220–222 (LSK) lie on the Extracellular side of the membrane. The chain crosses the membrane as a helical span at residues 223–243 (LVIVVYATMVFFIFVVLGGVA). K244 is a topological domain (cytoplasmic). Residues 245–265 (LFGINIFHIIKILKDELILAY) traverse the membrane as a helical segment. The Extracellular segment spans residues 266–306 (STASSETVLPKIMEKMENFGCPKAITSFVIPTGYSFNLDGS). Residues 307-327 (TLYQALAAIFIAQLYGIDMPI) form a helical membrane-spanning segment. Topologically, residues 328-330 (SQQ) are cytoplasmic. The next 2 membrane-spanning stretches (helical) occupy residues 331-351 (ISLL…PGVS) and 352-372 (FVVL…LAFI). The Cytoplasmic segment spans residues 373–421 (AGIDRILDMARTAVNVIGNSLAAIIMSKWEGQYNEEKGKQYIAQLQQSA).

It belongs to the dicarboxylate/amino acid:cation symporter (DAACS) (TC 2.A.23) family. As to quaternary structure, homotrimer.

The protein resides in the cell membrane. Functionally, this carrier protein is part of the Na(+)-dependent, binding-protein-independent glutamate-aspartate transport system. This Geobacillus stearothermophilus (Bacillus stearothermophilus) protein is Proton/sodium-glutamate symport protein (gltT).